A 146-amino-acid chain; its full sequence is Hemoglobin subunit beta-2 (146 aa).

In terms of domain architecture, Globin spans 2–146; sequence KWTDKERAVI…VVSALGKQYC (145 aa). Residues His-63 and His-92 each coordinate heme b.

Belongs to the globin family. As to quaternary structure, heterotetramer of two alpha chains and two beta chains. In terms of tissue distribution, red blood cells.

Involved in oxygen transport from gills to the various peripheral tissues. In Lycodes reticulatus (Arctic eelpout), this protein is Hemoglobin subunit beta-2 (hbb2).